The sequence spans 101 residues: Putative pterin-4-alpha-carbinolamine dehydratase (101 aa).

This sequence belongs to the pterin-4-alpha-carbinolamine dehydratase family.

It carries out the reaction (4aS,6R)-4a-hydroxy-L-erythro-5,6,7,8-tetrahydrobiopterin = (6R)-L-erythro-6,7-dihydrobiopterin + H2O. This chain is Putative pterin-4-alpha-carbinolamine dehydratase, found in Rhizobium johnstonii (strain DSM 114642 / LMG 32736 / 3841) (Rhizobium leguminosarum bv. viciae).